Consider the following 433-residue polypeptide: 3-phosphoshikimate 1-carboxyvinyltransferase (433 aa).

Lys-15, Ser-16, and Arg-20 together coordinate 3-phosphoshikimate. Lys-15 lines the phosphoenolpyruvate pocket. Residues Gly-96 and Arg-124 each coordinate phosphoenolpyruvate. 3-phosphoshikimate-binding residues include Ser-169, Gln-171, Ser-195, Asp-318, and Lys-345. Gln-171 is a phosphoenolpyruvate binding site. Asp-318 functions as the Proton acceptor in the catalytic mechanism. Residues Arg-349 and Arg-393 each contribute to the phosphoenolpyruvate site.

It belongs to the EPSP synthase family. In terms of assembly, monomer.

It is found in the cytoplasm. It catalyses the reaction 3-phosphoshikimate + phosphoenolpyruvate = 5-O-(1-carboxyvinyl)-3-phosphoshikimate + phosphate. Its pathway is metabolic intermediate biosynthesis; chorismate biosynthesis; chorismate from D-erythrose 4-phosphate and phosphoenolpyruvate: step 6/7. Its function is as follows. Catalyzes the transfer of the enolpyruvyl moiety of phosphoenolpyruvate (PEP) to the 5-hydroxyl of shikimate-3-phosphate (S3P) to produce enolpyruvyl shikimate-3-phosphate and inorganic phosphate. This Chlorobium luteolum (strain DSM 273 / BCRC 81028 / 2530) (Pelodictyon luteolum) protein is 3-phosphoshikimate 1-carboxyvinyltransferase.